The primary structure comprises 426 residues: Tyrosine--tRNA ligase (426 aa).

An L-tyrosine-binding site is contributed by Tyr35. A 'HIGH' region motif is present at residues 40 to 49 (PTADSLHIGH). Residues Tyr172 and Gln176 each coordinate L-tyrosine. Positions 232 to 236 (KLGKS) match the 'KMSKS' region motif. An ATP-binding site is contributed by Lys235. In terms of domain architecture, S4 RNA-binding spans 357 to 414 (ENIKDILVNSKLSKSKNNAKSVILSSSIRINNKKQKSIDFMFKKEDKLFNLFTLIKKG).

This sequence belongs to the class-I aminoacyl-tRNA synthetase family. TyrS type 1 subfamily. Homodimer.

It localises to the cytoplasm. It catalyses the reaction tRNA(Tyr) + L-tyrosine + ATP = L-tyrosyl-tRNA(Tyr) + AMP + diphosphate + H(+). Catalyzes the attachment of tyrosine to tRNA(Tyr) in a two-step reaction: tyrosine is first activated by ATP to form Tyr-AMP and then transferred to the acceptor end of tRNA(Tyr). The chain is Tyrosine--tRNA ligase from Wigglesworthia glossinidia brevipalpis.